Here is a 323-residue protein sequence, read N- to C-terminus: Annexin A3 (323 aa).

Position 2 is an N-acetylalanine (Ala2). 4 Annexin repeats span residues 18–89, 90–161, 173–245, and 249–320; these read FSPS…ALVT, PPAV…TLAD, HLAK…AIVN, and NTPA…KICG. Position 267 is a phosphothreonine (Thr267).

Belongs to the annexin family.

In terms of biological role, inhibitor of phospholipase A2, also possesses anti-coagulant properties. Also cleaves the cyclic bond of inositol 1,2-cyclic phosphate to form inositol 1-phosphate. This is Annexin A3 (ANXA3) from Homo sapiens (Human).